Reading from the N-terminus, the 389-residue chain is Metal tolerance protein 2 (389 aa).

Topologically, residues 1–81 are cytoplasmic; that stretch reads MGFRLAHLAA…GGEASERIFR (81 aa). A helical transmembrane segment spans residues 82-102; that stretch reads LGLAADVVLTVGKAVTGYLSG. Topologically, residues 103-104 are vacuolar; the sequence is ST. A helical transmembrane segment spans residues 105–125; it reads AIAADAAHSLSDIVLSGVALL. Residues 126-148 lie on the Cytoplasmic side of the membrane; it reads SYKAAKAPRDKEHPYGHGKFESL. The helical transmembrane segment at 149–169 threads the bilayer; it reads GALGISSMLLVTAGGIAWHAF. The Vacuolar segment spans residues 170 to 206; the sequence is DVLQGVMSSAPDIIGNVSHAHHSHGSSGHHHGIDLEH. Residues 207-227 traverse the membrane as a helical segment; it reads PILALSVTAFAISVKEGLYWI. The Cytoplasmic segment spans residues 228–250; it reads TKRAGEKEGSGLMKANAWHHRSD. The helical transmembrane segment at 251 to 271 threads the bilayer; the sequence is AISSVVALLGVGGSILGVPYL. The Vacuolar portion of the chain corresponds to 272 to 275; that stretch reads DPLA. The chain crosses the membrane as a helical span at residues 276–296; the sequence is GLVVSGMILKAGVHTGYESVL. Residues 297-389 are Cytoplasmic-facing; the sequence is ELVDAAVDPS…SLQPLNQNAL (93 aa).

It belongs to the cation diffusion facilitator (CDF) transporter (TC 2.A.4) family. SLC30A subfamily.

It localises to the vacuole membrane. In terms of biological role, involved in sequestration of excess metal in the cytoplasm into vacuoles to maintain metal homeostasis. The polypeptide is Metal tolerance protein 2 (MTP2) (Oryza sativa subsp. japonica (Rice)).